Reading from the N-terminus, the 505-residue chain is Putative ribose/galactose/methyl galactoside import ATP-binding protein 1 (505 aa).

2 consecutive ABC transporter domains span residues 10-245 (LRLE…VGRS) and 256-501 (RPTD…SGYG). Residue 42–49 (GENGAGKS) participates in ATP binding.

The protein belongs to the ABC transporter superfamily. Carbohydrate importer 2 (CUT2) (TC 3.A.1.2) family.

The protein resides in the cell inner membrane. It carries out the reaction D-ribose(out) + ATP + H2O = D-ribose(in) + ADP + phosphate + H(+). It catalyses the reaction D-galactose(out) + ATP + H2O = D-galactose(in) + ADP + phosphate + H(+). Functionally, part of an ABC transporter complex involved in carbohydrate import. Could be involved in ribose, galactose and/or methyl galactoside import. Responsible for energy coupling to the transport system. The protein is Putative ribose/galactose/methyl galactoside import ATP-binding protein 1 of Agrobacterium fabrum (strain C58 / ATCC 33970) (Agrobacterium tumefaciens (strain C58)).